A 635-amino-acid polypeptide reads, in one-letter code: Threonine--tRNA ligase (635 aa).

The region spanning 1 to 61 (MINISFPDGS…DNDCKLRILT (61 aa)) is the TGS domain. Positions 242-533 (DHRKLGRELD…LIEEYAGRFP (292 aa)) are catalytic. Positions 333, 384, and 510 each coordinate Zn(2+).

Belongs to the class-II aminoacyl-tRNA synthetase family. In terms of assembly, homodimer. Zn(2+) serves as cofactor.

It is found in the cytoplasm. It carries out the reaction tRNA(Thr) + L-threonine + ATP = L-threonyl-tRNA(Thr) + AMP + diphosphate + H(+). Catalyzes the attachment of threonine to tRNA(Thr) in a two-step reaction: L-threonine is first activated by ATP to form Thr-AMP and then transferred to the acceptor end of tRNA(Thr). Also edits incorrectly charged L-seryl-tRNA(Thr). In Rickettsia peacockii (strain Rustic), this protein is Threonine--tRNA ligase.